Reading from the N-terminus, the 215-residue chain is ATP-dependent Clp protease proteolytic subunit 3 (215 aa).

Catalysis depends on serine 119, which acts as the Nucleophile. The active site involves histidine 144.

This sequence belongs to the peptidase S14 family. In terms of assembly, fourteen ClpP subunits assemble into 2 heptameric rings which stack back to back to give a disk-like structure with a central cavity, resembling the structure of eukaryotic proteasomes.

The protein localises to the cytoplasm. The catalysed reaction is Hydrolysis of proteins to small peptides in the presence of ATP and magnesium. alpha-casein is the usual test substrate. In the absence of ATP, only oligopeptides shorter than five residues are hydrolyzed (such as succinyl-Leu-Tyr-|-NHMec, and Leu-Tyr-Leu-|-Tyr-Trp, in which cleavage of the -Tyr-|-Leu- and -Tyr-|-Trp bonds also occurs).. In terms of biological role, cleaves peptides in various proteins in a process that requires ATP hydrolysis. Has a chymotrypsin-like activity. Plays a major role in the degradation of misfolded proteins. The protein is ATP-dependent Clp protease proteolytic subunit 3 of Prochlorococcus marinus subsp. pastoris (strain CCMP1986 / NIES-2087 / MED4).